An 871-amino-acid polypeptide reads, in one-letter code: Protein pob1 (871 aa).

In terms of domain architecture, SH3 spans 2–65 (ASQRFVIALH…PASHVELISD (64 aa)). Residues 42 to 168 (WWEGEDEQGN…PSSDLSNFNT (127 aa)) form a disordered region. Basic and acidic residues predominate over residues 62 to 80 (LISDERSDSSDSRRGKEDF). Low complexity-rich tracts occupy residues 88 to 100 (TRSS…STSS) and 109 to 124 (LYSN…SILN). The span at 131 to 168 (SKPSVPSNFNSMFPSSKQEGPSPLLDNQPSSDLSNFNT) shows a compositional bias: polar residues. 2 positions are modified to phosphoserine: serine 224 and serine 225. Position 229 is a phosphotyrosine (tyrosine 229). Position 241 is a phosphoserine (serine 241). One can recognise an SAM domain in the interval 250–313 (WSTEEVVEWL…LRKIQQLKDS (64 aa)). Residues 329–343 (ISVSQSSDSSSSIPK) show a composition bias toward low complexity. 2 disordered regions span residues 329–371 (ISVS…NRPT) and 384–670 (PDLD…KSKR). 2 stretches are compositionally biased toward polar residues: residues 384-395 (PDLDSSPSTDWN) and 404-451 (TPSS…NSGL). Phosphoserine is present on residues serine 433, serine 439, and serine 440. Threonine 442 bears the Phosphothreonine mark. Residue serine 444 is modified to Phosphoserine. Over residues 456-467 (TEPISSPSTSSI) the composition is skewed to low complexity. The segment covering 492–511 (QPSSNVPTKFTGGASESSSV) has biased composition (polar residues). Serine 549 carries the phosphoserine modification. Over residues 549–560 (SPSSISSRLPSS) the composition is skewed to low complexity. Composition is skewed to polar residues over residues 561-574 (NLEQ…TKSP) and 583-606 (KASS…NYAT). Residues 698–808 (TADCHGWMRK…WSSAFLKATV (111 aa)) enclose the PH domain.

It is found in the cytoplasm. The protein localises to the membrane. Functionally, has a role in cell elongation and separation. The sequence is that of Protein pob1 (pob1) from Schizosaccharomyces pombe (strain 972 / ATCC 24843) (Fission yeast).